Consider the following 185-residue polypeptide: Ribosome-recycling factor (185 aa).

Belongs to the RRF family.

The protein resides in the cytoplasm. In terms of biological role, responsible for the release of ribosomes from messenger RNA at the termination of protein biosynthesis. May increase the efficiency of translation by recycling ribosomes from one round of translation to another. In Vibrio vulnificus (strain YJ016), this protein is Ribosome-recycling factor.